Consider the following 542-residue polypeptide: Chaperonin GroEL (542 aa).

Residues 29–32 (TLGP), 86–90 (DGTTT), Gly413, 476–478 (NAA), and Asp492 each bind ATP.

The protein belongs to the chaperonin (HSP60) family. Forms a cylinder of 14 subunits composed of two heptameric rings stacked back-to-back. Interacts with the co-chaperonin GroES.

The protein resides in the cytoplasm. It carries out the reaction ATP + H2O + a folded polypeptide = ADP + phosphate + an unfolded polypeptide.. Its function is as follows. Together with its co-chaperonin GroES, plays an essential role in assisting protein folding. The GroEL-GroES system forms a nano-cage that allows encapsulation of the non-native substrate proteins and provides a physical environment optimized to promote and accelerate protein folding. The sequence is that of Chaperonin GroEL from Lactococcus lactis subsp. lactis (strain IL1403) (Streptococcus lactis).